Consider the following 218-residue polypeptide: Ribose-5-phosphate isomerase A (218 aa).

Substrate is bound by residues 28–31 (TGST), 81–84 (DGAD), and 94–97 (KGGG). The active-site Proton acceptor is glutamate 103. Lysine 121 contributes to the substrate binding site.

It belongs to the ribose 5-phosphate isomerase family. As to quaternary structure, homodimer.

The enzyme catalyses aldehydo-D-ribose 5-phosphate = D-ribulose 5-phosphate. It participates in carbohydrate degradation; pentose phosphate pathway; D-ribose 5-phosphate from D-ribulose 5-phosphate (non-oxidative stage): step 1/1. Its function is as follows. Catalyzes the reversible conversion of ribose-5-phosphate to ribulose 5-phosphate. The polypeptide is Ribose-5-phosphate isomerase A (Thioalkalivibrio sulfidiphilus (strain HL-EbGR7)).